The sequence spans 221 residues: UPF0758 protein NTHI1125 (221 aa).

In terms of domain architecture, MPN spans 98-221 (PIINDLETVK…CYSFAENCLL (124 aa)). Zn(2+) contacts are provided by H170, H172, and D183. The short motif at 170–183 (HNHPSGITEPSYSD) is the JAMM motif element.

This sequence belongs to the UPF0758 family.

The polypeptide is UPF0758 protein NTHI1125 (Haemophilus influenzae (strain 86-028NP)).